The chain runs to 121 residues: Large ribosomal subunit protein uL18 (121 aa).

Belongs to the universal ribosomal protein uL18 family. As to quaternary structure, part of the 50S ribosomal subunit; part of the 5S rRNA/L5/L18/L25 subcomplex. Contacts the 5S and 23S rRNAs.

This is one of the proteins that bind and probably mediate the attachment of the 5S RNA into the large ribosomal subunit, where it forms part of the central protuberance. This is Large ribosomal subunit protein uL18 from Ehrlichia canis (strain Jake).